The following is a 400-amino-acid chain: Queuine tRNA-ribosyltransferase (400 aa).

Asp-93 (proton acceptor) is an active-site residue. Substrate-binding positions include 93–97 (DSGGF), Asp-166, and Gly-247. An RNA binding region spans residues 277–283 (GIGDVDD). Catalysis depends on Asp-296, which acts as the Nucleophile. The RNA binding; important for wobble base 34 recognition stretch occupies residues 301–305 (TRLGR). Zn(2+) contacts are provided by Cys-338, Cys-340, Cys-343, and His-369.

It belongs to the queuine tRNA-ribosyltransferase family. In terms of assembly, homodimer. Within each dimer, one monomer is responsible for RNA recognition and catalysis, while the other monomer binds to the replacement base PreQ1. The cofactor is Zn(2+).

The enzyme catalyses 7-aminomethyl-7-carbaguanine + guanosine(34) in tRNA = 7-aminomethyl-7-carbaguanosine(34) in tRNA + guanine. Its pathway is tRNA modification; tRNA-queuosine biosynthesis. Functionally, catalyzes the base-exchange of a guanine (G) residue with the queuine precursor 7-aminomethyl-7-deazaguanine (PreQ1) at position 34 (anticodon wobble position) in tRNAs with GU(N) anticodons (tRNA-Asp, -Asn, -His and -Tyr). Catalysis occurs through a double-displacement mechanism. The nucleophile active site attacks the C1' of nucleotide 34 to detach the guanine base from the RNA, forming a covalent enzyme-RNA intermediate. The proton acceptor active site deprotonates the incoming PreQ1, allowing a nucleophilic attack on the C1' of the ribose to form the product. After dissociation, two additional enzymatic reactions on the tRNA convert PreQ1 to queuine (Q), resulting in the hypermodified nucleoside queuosine (7-(((4,5-cis-dihydroxy-2-cyclopenten-1-yl)amino)methyl)-7-deazaguanosine). The chain is Queuine tRNA-ribosyltransferase from Roseiflexus sp. (strain RS-1).